A 509-amino-acid chain; its full sequence is uncharacterized protein (509 aa).

Residues 108–225 (GKSSLCNLLA…KRHKPLFPVI (118 aa)) enclose the G domain.

This is an uncharacterized protein from Acinetobacter baylyi (strain ATCC 33305 / BD413 / ADP1).